Consider the following 338-residue polypeptide: Glyceraldehyde-3-phosphate dehydrogenase (338 aa).

Residues 12-13, D38, and S125 contribute to the NAD(+) site; that span reads RI. D-glyceraldehyde 3-phosphate contacts are provided by residues 155 to 157, T186, 216 to 217, and R239; these read SCT and TG. C156 functions as the Nucleophile in the catalytic mechanism. Residue N320 coordinates NAD(+).

The protein belongs to the glyceraldehyde-3-phosphate dehydrogenase family. Homotetramer.

The protein resides in the cytoplasm. The catalysed reaction is D-glyceraldehyde 3-phosphate + phosphate + NAD(+) = (2R)-3-phospho-glyceroyl phosphate + NADH + H(+). The protein operates within carbohydrate degradation; glycolysis; pyruvate from D-glyceraldehyde 3-phosphate: step 1/5. In terms of biological role, catalyzes the oxidative phosphorylation of glyceraldehyde 3-phosphate (G3P) to 1,3-bisphosphoglycerate (BPG) using the cofactor NAD. The first reaction step involves the formation of a hemiacetal intermediate between G3P and a cysteine residue, and this hemiacetal intermediate is then oxidized to a thioester, with concomitant reduction of NAD to NADH. The reduced NADH is then exchanged with the second NAD, and the thioester is attacked by a nucleophilic inorganic phosphate to produce BPG. This Lactobacillus delbrueckii subsp. bulgaricus protein is Glyceraldehyde-3-phosphate dehydrogenase (gap).